Reading from the N-terminus, the 1894-residue chain is Adenylate kinase 9 (1894 aa).

The adenylate kinase 1 stretch occupies residues 32–286 (TCFIIFGKPG…LFMTVIERLK (255 aa)). 41-46 (GAGKTT) is a binding site for ATP. Residues 61-90 (EALSVLEEHIAAEKETGAMLQSLLVSGHSI) form an NMP 1 region. 117 to 120 (EMPS) serves as a coordination point for AMP. Residues 161–206 (GQRQHSTTGYVYTREQWDPEIIESRRRKKRDFPKEGKSEEEEEEEE) form an LID 1 region. The interval 188–211 (KKRDFPKEGKSEEEEEEEEQEEEE) is disordered. Positions 198–211 (SEEEEEEEEQEEEE) are enriched in acidic residues. Residue R230 participates in AMP binding. Positions 451-478 (IKVVQQRLLNEKQAKQQEERTLKELQVQ) form a coiled coil. Residues 492–533 (SEELPSLENTGSKLSSLEIGQEDKSKSETTITGDQVKDVSTE) are disordered. Residues 651-691 (LERLQEEAQAKKREEEEIRKVKEEELRLEEEKQRLMELATK) adopt a coiled-coil conformation. Disordered regions lie at residues 710-789 (PYPD…LGSE) and 876-911 (EEEAEDYQAETEIDEEQEEEEEEEEEGEEKIKEKRR). Residues 715 to 736 (PDNEAEEEVEDSEIHEESEAQE) are compositionally biased toward acidic residues. Composition is skewed to basic and acidic residues over residues 757–768 (EGDHEPEAEFKP) and 777–789 (ETEKDPKEGLGSE). Positions 876-903 (EEEAEDYQAETEIDEEQEEEEEEEEEGE) are enriched in acidic residues. Residues 976–1187 (LRICLLGPHG…VAKRRAELIL (212 aa)) are adenylate kinase 2. Position 985-990 (985-990 (GSGKTV)) interacts with ATP. The interval 1005–1036 (QFDEFLQEKMLLKAERKFGPEFEDDSEEEQLV) is NMP 2. Residues 1034-1036 (QLV) and 1063-1066 (VQLT) contribute to the AMP site. Residues 1108–1128 (DGFPRHPEEAQFLGERGFFPD) are LID 2. Residues 1223–1241 (EFPKDEEEMSEEDEEQEAD) are compositionally biased toward acidic residues. Residues 1223–1243 (EFPKDEEEMSEEDEEQEADAT) form a disordered region. Residues 1395-1584 (VRIMIVGPPK…VWNEVLKDIQ (190 aa)) are adenylate kinase 3. 1404–1409 (KSGKTT) lines the ATP pocket. The segment at 1424–1455 (SVGDALRGMLNNHPDSELSLMLNWHLHKGKTV) is NMP 3. AMP is bound by residues R1430, 1482–1485 (GYPV), and Q1489. The LID 3 stretch occupies residues 1519 to 1533 (LEKKTEQSMSYPLHN).

Belongs to the adenylate kinase family. Highly expressed in the testis.

It is found in the cytoplasm. The protein resides in the nucleus. Its subcellular location is the cell projection. It localises to the cilium. The protein localises to the flagellum. It catalyses the reaction a ribonucleoside 5'-phosphate + ATP = a ribonucleoside 5'-diphosphate + ADP. The enzyme catalyses AMP + ATP = 2 ADP. It carries out the reaction GTP + AMP = GDP + ADP. The catalysed reaction is CMP + ATP = CDP + ADP. It catalyses the reaction GTP + CMP = CDP + GDP. The enzyme catalyses dAMP + ATP = dADP + ADP. It carries out the reaction dCMP + ATP = dCDP + ADP. The catalysed reaction is a ribonucleoside 5'-diphosphate + ATP = a ribonucleoside 5'-triphosphate + ADP. It catalyses the reaction CDP + ATP = CTP + ADP. The enzyme catalyses CDP + GTP = CTP + GDP. It carries out the reaction GDP + ATP = GTP + ADP. The catalysed reaction is UDP + ATP = UTP + ADP. It catalyses the reaction GTP + UDP = UTP + GDP. The enzyme catalyses dTDP + GTP = dTTP + GDP. It carries out the reaction dCDP + ATP = dCTP + ADP. The catalysed reaction is dCDP + GTP = dCTP + GDP. It catalyses the reaction dGDP + ATP = dGTP + ADP. The enzyme catalyses dTDP + ATP = dTTP + ADP. It carries out the reaction dADP + GTP = dATP + GDP. Its function is as follows. Broad-specificity nucleoside phosphate kinase involved in cellular nucleotide homeostasis by catalyzing nucleoside-phosphate interconversions. Similar to other adenylate kinases, preferentially catalyzes the phosphorylation of the nucleoside monophosphate AMP with ATP as phosphate donor to produce ADP. In vitro, can also catalyze the phosphorylation of CMP, dAMP and dCMP and use GTP as an alternate phosphate donor. Moreover, exhibits a diphosphate kinase activity, producing ATP, CTP, GTP, UTP, TTP, dATP, dCTP and dGTP from the corresponding diphosphate substrates with either ATP or GTP as phosphate donors. For this activity shows the following substrate preference CDP &gt; UDP &gt; ADP &gt; TDP. The sequence is that of Adenylate kinase 9 from Mus musculus (Mouse).